The sequence spans 615 residues: Sterol 3-beta-glucosyltransferase UGT80B1 (615 aa).

The interval 1 to 54 (MASNVFDHPLQELEGEDNGVKSEKASLLETSGSVDTTPEDSGHRSSDGHRGLDH) is disordered. Positions 40–54 (DSGHRSSDGHRGLDH) are enriched in basic and acidic residues.

The protein belongs to the glycosyltransferase 28 family. In terms of tissue distribution, expressed in developing seeds, seedlings, leaves and around the apical tip of cotyledons. In embryo, expressed in the seed coat and cotyledons.

It catalyses the reaction a sterol + UDP-alpha-D-glucose = a sterol 3-beta-D-glucoside + UDP + H(+). Its function is as follows. Involved in the biosynthesis of sterol glucosides. Catalyzes the synthesis of steryl glycosides (SGs) and acyl steryl glycosides (ASGs) which are the most abundant sterol derivatives in higher plants. Can act on several sterols like sitosterol, campesterol and stigmasterol. Is required for embryonic development, seed suberin accumulation, cutin formation and flavanoid accumulation in the seed coat. Both UGT80A2 and UGT80B1 are required for the normal production of SGs and ASGs in seeds. In Arabidopsis thaliana (Mouse-ear cress), this protein is Sterol 3-beta-glucosyltransferase UGT80B1.